Consider the following 398-residue polypeptide: MANHHNAEIEEIRNRQRAQGPANILAIGTATPSNCVYQADYPDYYFRITNSEHMTDLKLKFKRMCEKSMIRKRYMHITEEYLKENPNVCAYEAPSLDARQDLVVVEVPRLGKEAASKAIKEWGQPKSKITHLIFCTTSGVDMPGADYQLTKLLGLRPSVKRFMMYQQGCFAGGTVLRLAKDLAENNAGARVLVVCSEITAVTFRGPSDSHLDSLVGQALFGDGAAAVILGSDPDLSVERPLFQLISAAQTILPDSDGAIDGHLREVGLTFHLLKDVPGLISKNIEKSLKEAFGPIGISDWNSLFWIAHPGGPAILDQVELKLGLKEEKMRATRQVLSDYGNMSSACVLFILDEMRKKSIEEGKATTGEGLDWGVLFGFGPGLTVETVVLHSVPATFTH.

The active site involves cysteine 169.

It belongs to the thiolase-like superfamily. Chalcone/stilbene synthases family.

It carries out the reaction (E)-4-coumaroyl-CoA + 3 malonyl-CoA + 3 H(+) = 2',4,4',6'-tetrahydroxychalcone + 3 CO2 + 4 CoA. Its pathway is secondary metabolite biosynthesis; flavonoid biosynthesis. Functionally, the primary product of this enzyme is 4,2',4',6'-tetrahydroxychalcone (also termed naringenin-chalcone or chalcone) which can under specific conditions spontaneously isomerize into naringenin. This is Chalcone synthase (CHS) from Petroselinum crispum (Parsley).